We begin with the raw amino-acid sequence, 326 residues long: Aspartate carbamoyltransferase catalytic subunit (326 aa).

The carbamoyl phosphate site is built by arginine 58 and threonine 59. Position 86 (lysine 86) interacts with L-aspartate. Positions 108, 141, and 144 each coordinate carbamoyl phosphate. L-aspartate contacts are provided by arginine 181 and arginine 239. Carbamoyl phosphate is bound by residues glycine 280 and proline 281.

It belongs to the aspartate/ornithine carbamoyltransferase superfamily. ATCase family. As to quaternary structure, heterododecamer (2C3:3R2) of six catalytic PyrB chains organized as two trimers (C3), and six regulatory PyrI chains organized as three dimers (R2).

It carries out the reaction carbamoyl phosphate + L-aspartate = N-carbamoyl-L-aspartate + phosphate + H(+). Its pathway is pyrimidine metabolism; UMP biosynthesis via de novo pathway; (S)-dihydroorotate from bicarbonate: step 2/3. Catalyzes the condensation of carbamoyl phosphate and aspartate to form carbamoyl aspartate and inorganic phosphate, the committed step in the de novo pyrimidine nucleotide biosynthesis pathway. This is Aspartate carbamoyltransferase catalytic subunit from Synechococcus sp. (strain JA-3-3Ab) (Cyanobacteria bacterium Yellowstone A-Prime).